Consider the following 115-residue polypeptide: Large ribosomal subunit protein P2y (115 aa).

The segment at Ala63 to Glu115 is disordered. The segment covering Glu92–Lys102 has biased composition (basic and acidic residues). Residue Ser105 is modified to Phosphoserine.

This sequence belongs to the eukaryotic ribosomal protein P1/P2 family. In terms of assembly, P1 and P2 exist as dimers at the large ribosomal subunit. In terms of processing, phosphorylated.

Its function is as follows. Plays an important role in the elongation step of protein synthesis. The sequence is that of Large ribosomal subunit protein P2y (RPP2B) from Arabidopsis thaliana (Mouse-ear cress).